Here is a 163-residue protein sequence, read N- to C-terminus: Ribosome maturation factor RimM (163 aa).

Residues 92-161 form the PRC barrel domain; the sequence is PGEYYHHDLI…AETVTVNAAF (70 aa).

It belongs to the RimM family. Binds ribosomal protein uS19.

Its subcellular location is the cytoplasm. In terms of biological role, an accessory protein needed during the final step in the assembly of 30S ribosomal subunit, possibly for assembly of the head region. Essential for efficient processing of 16S rRNA. May be needed both before and after RbfA during the maturation of 16S rRNA. It has affinity for free ribosomal 30S subunits but not for 70S ribosomes. This chain is Ribosome maturation factor RimM, found in Sphingopyxis alaskensis (strain DSM 13593 / LMG 18877 / RB2256) (Sphingomonas alaskensis).